The sequence spans 538 residues: Chaperonin GroEL (538 aa).

ATP contacts are provided by residues 29-32, 86-90, Gly-413, 477-479, and Asp-493; these read TLGP, DGTTT, and NAA.

Belongs to the chaperonin (HSP60) family. Forms a cylinder of 14 subunits composed of two heptameric rings stacked back-to-back. Interacts with the co-chaperonin GroES.

It is found in the cytoplasm. It carries out the reaction ATP + H2O + a folded polypeptide = ADP + phosphate + an unfolded polypeptide.. In terms of biological role, together with its co-chaperonin GroES, plays an essential role in assisting protein folding. The GroEL-GroES system forms a nano-cage that allows encapsulation of the non-native substrate proteins and provides a physical environment optimized to promote and accelerate protein folding. This chain is Chaperonin GroEL, found in Bifidobacterium adolescentis (strain ATCC 15703 / DSM 20083 / NCTC 11814 / E194a).